The chain runs to 339 residues: Glycerol-3-phosphate dehydrogenase [NAD(P)+] (339 aa).

NADPH-binding residues include S15, Y16, H36, and K110. The sn-glycerol 3-phosphate site is built by K110, G139, and T141. A143 is an NADPH binding site. The sn-glycerol 3-phosphate site is built by K195, D248, S258, R259, and N260. K195 functions as the Proton acceptor in the catalytic mechanism. R259 contacts NADPH. V283 and E285 together coordinate NADPH.

Belongs to the NAD-dependent glycerol-3-phosphate dehydrogenase family.

The protein resides in the cytoplasm. The enzyme catalyses sn-glycerol 3-phosphate + NAD(+) = dihydroxyacetone phosphate + NADH + H(+). It carries out the reaction sn-glycerol 3-phosphate + NADP(+) = dihydroxyacetone phosphate + NADPH + H(+). It participates in membrane lipid metabolism; glycerophospholipid metabolism. Catalyzes the reduction of the glycolytic intermediate dihydroxyacetone phosphate (DHAP) to sn-glycerol 3-phosphate (G3P), the key precursor for phospholipid synthesis. The protein is Glycerol-3-phosphate dehydrogenase [NAD(P)+] of Pectobacterium atrosepticum (strain SCRI 1043 / ATCC BAA-672) (Erwinia carotovora subsp. atroseptica).